The primary structure comprises 214 residues: MVVKVYGQIKAANPQRVLLCFLEKDIEFEVIHVDLDKLEQKKPQHLLRQPFGQVPAIEDGYLKLFESRAIARYYATKYADQGTDLLGKTLEGRAIVDQWVEVENNYFYAVALPLVMNVVFKPKSGKPCDVALVEELKVKFDKVLDVYENRLATNRYLGGDEFTLADLSHMPGMRYIMNETSLSGLVTSRENLNRWWNEISARPAWKKLMELAAY.

A GST N-terminal domain is found at 2–82 (VVKVYGQIKA…YYATKYADQG (81 aa)). Residues 11–12 (AA), 40–41 (QK), 53–54 (QV), and 66–67 (ES) contribute to the glutathione site. A GST C-terminal domain is found at 89–214 (TLEGRAIVDQ…WKKLMELAAY (126 aa)).

This sequence belongs to the GST superfamily. Phi family.

It localises to the cytoplasm. It is found in the cytosol. It catalyses the reaction RX + glutathione = an S-substituted glutathione + a halide anion + H(+). May be involved in the conjugation of reduced glutathione to a wide number of exogenous and endogenous hydrophobic electrophiles and have a detoxification role against certain herbicides. This is Glutathione S-transferase F11 from Arabidopsis thaliana (Mouse-ear cress).